Consider the following 218-residue polypeptide: Telomere repeats-binding bouquet formation protein 2 (218 aa).

Residues His-117–Glu-143 are disordered.

It belongs to the TERB2 family. As to quaternary structure, component of the MAJIN-TERB1-TERB2 complex, composed of MAJIN, TERB1 and TERB2. Specifically expressed in germline tissues.

The protein localises to the chromosome. It localises to the telomere. Its subcellular location is the nucleus inner membrane. Functionally, meiosis-specific telomere-associated protein involved in meiotic telomere attachment to the nucleus inner membrane, a crucial step for homologous pairing and synapsis. Component of the MAJIN-TERB1-TERB2 complex, which promotes telomere cap exchange by mediating attachment of telomeric DNA to the inner nuclear membrane and replacement of the protective cap of telomeric chromosomes: in early meiosis, the MAJIN-TERB1-TERB2 complex associates with telomeric DNA and the shelterin/telosome complex. During prophase, the complex matures and promotes release of the shelterin/telosome complex from telomeric DNA. The sequence is that of Telomere repeats-binding bouquet formation protein 2 from Mus musculus (Mouse).